We begin with the raw amino-acid sequence, 370 residues long: L-lysine 4-hydroxylase (370 aa).

Fe cation contacts are provided by His176, Glu178, and His310.

This sequence belongs to the clavaminate synthase family. Fe(2+) is required as a cofactor.

The enzyme catalyses L-lysine + 2-oxoglutarate + O2 = (4R)-4-hydroxy-L-lysine + succinate + CO2. Functionally, alpha-ketoglutarate-dependent dioxygenase that in vitro catalyzes the regio- and stereoselective hydroxylation of L-lysine, leading to (4R)-4-hydroxy-L-lysine. To a lesser extent, can also use (3S)-3-hydroxy-L-lysine as substrate, producing the dihydroxylated product (3R,4R)-3,4-hydroxy-L-lysine. Cannot use D-lysine or L-ornithine as substrate. The chain is L-lysine 4-hydroxylase from Flavobacterium johnsoniae (strain ATCC 17061 / DSM 2064 / JCM 8514 / BCRC 14874 / CCUG 350202 / NBRC 14942 / NCIMB 11054 / UW101) (Cytophaga johnsonae).